An 850-amino-acid chain; its full sequence is Protein STB2 (850 aa).

Phosphoserine occurs at positions 594 and 625.

It to yeast STB6. Interacts with SIN3.

The polypeptide is Protein STB2 (STB2) (Saccharomyces cerevisiae (strain ATCC 204508 / S288c) (Baker's yeast)).